We begin with the raw amino-acid sequence, 653 residues long: Eukaryotic translation initiation factor 4E-binding protein Mextli (653 aa).

The region spanning 227–292 is the KH domain; sequence YCKDEVVIRN…DKINYAKQLM (66 aa). 2 disordered regions span residues 311–335 and 515–570; these read VGGS…TPTG and EGDD…AGTN. 2 stretches are compositionally biased toward low complexity: residues 314–323 and 525–536; these read SCSSLNSSNS and SNGGSSTSNQNG. Residues 546–563 are compositionally biased toward basic and acidic residues; the sequence is SRKESTPETKGAREKGDL.

In terms of assembly, interacts with eukaryotic translation initiation factor eIF4E1. Also interacts with eukaryotic translation initiation factor 3 complex members eif3-S9/eif3b, Int6/eif3e and eIF-3p40/eif3h and with CG3225.

The protein localises to the cytoplasm. It is found in the cytoplasmic ribonucleoprotein granule. Plays a role in promoting translation. In Drosophila melanogaster (Fruit fly), this protein is Eukaryotic translation initiation factor 4E-binding protein Mextli.